A 303-amino-acid chain; its full sequence is UDP-3-O-acyl-N-acetylglucosamine deacetylase (303 aa).

Positions 78, 237, and 241 each coordinate Zn(2+). His-264 (proton donor) is an active-site residue.

The protein belongs to the LpxC family. Zn(2+) is required as a cofactor.

It carries out the reaction a UDP-3-O-[(3R)-3-hydroxyacyl]-N-acetyl-alpha-D-glucosamine + H2O = a UDP-3-O-[(3R)-3-hydroxyacyl]-alpha-D-glucosamine + acetate. Its pathway is glycolipid biosynthesis; lipid IV(A) biosynthesis; lipid IV(A) from (3R)-3-hydroxytetradecanoyl-[acyl-carrier-protein] and UDP-N-acetyl-alpha-D-glucosamine: step 2/6. In terms of biological role, catalyzes the hydrolysis of UDP-3-O-myristoyl-N-acetylglucosamine to form UDP-3-O-myristoylglucosamine and acetate, the committed step in lipid A biosynthesis. The sequence is that of UDP-3-O-acyl-N-acetylglucosamine deacetylase from Xanthomonas campestris pv. campestris (strain 8004).